A 26-amino-acid polypeptide reads, in one-letter code: Maculatin-3.1 (26 aa).

Residue Ala-26 is modified to Alanine amide.

Expressed by the skin dorsal glands.

The protein localises to the secreted. In terms of biological role, shows antibacterial activity against S.uberis. The chain is Maculatin-3.1 from Ranoidea genimaculata (Brown-spotted tree frog).